Here is an 820-residue protein sequence, read N- to C-terminus: LPS-assembly protein LptD (820 aa).

The disordered stretch occupies residues 1–27; it reads MDLSSLPDPLRPTHSRLPARRRDRAEP. Positions 13–22 are enriched in basic residues; sequence THSRLPARRR.

It belongs to the LptD family. As to quaternary structure, component of the lipopolysaccharide transport and assembly complex. Interacts with LptE and LptA.

In terms of biological role, together with LptE, is involved in the assembly of lipopolysaccharide (LPS) at the surface of the outer membrane. This Paracidovorax citrulli (strain AAC00-1) (Acidovorax citrulli) protein is LPS-assembly protein LptD.